The primary structure comprises 180 residues: Acireductone dioxygenase (180 aa).

Positions 88, 90, 94, and 133 each coordinate Fe(2+). H88, H90, E94, and H133 together coordinate Ni(2+).

This sequence belongs to the acireductone dioxygenase (ARD) family. In terms of assembly, monomer. Interacts with MMP14. The cofactor is Fe(2+). Ni(2+) serves as cofactor.

It localises to the cytoplasm. The protein resides in the nucleus. It is found in the cell membrane. The enzyme catalyses 1,2-dihydroxy-5-(methylsulfanyl)pent-1-en-3-one + O2 = 4-methylsulfanyl-2-oxobutanoate + formate + 2 H(+). The catalysed reaction is 1,2-dihydroxy-5-(methylsulfanyl)pent-1-en-3-one + O2 = 3-(methylsulfanyl)propanoate + CO + formate + 2 H(+). Its pathway is amino-acid biosynthesis; L-methionine biosynthesis via salvage pathway; L-methionine from S-methyl-5-thio-alpha-D-ribose 1-phosphate: step 5/6. In terms of biological role, catalyzes 2 different reactions between oxygen and the acireductone 1,2-dihydroxy-3-keto-5-methylthiopentene (DHK-MTPene) depending upon the metal bound in the active site. Fe-containing acireductone dioxygenase (Fe-ARD) produces formate and 2-keto-4-methylthiobutyrate (KMTB), the alpha-ketoacid precursor of methionine in the methionine recycle pathway. Ni-containing acireductone dioxygenase (Ni-ARD) produces methylthiopropionate, carbon monoxide and formate, and does not lie on the methionine recycle pathway. In Gallus gallus (Chicken), this protein is Acireductone dioxygenase.